The chain runs to 71 residues: Plasticin-DA1 (71 aa).

Positions 1 to 22 (MAFLKKSLFLVLFLALVPLSIC) are cleaved as a signal peptide. The propeptide occupies 23–42 (EAEKREEENEEKQEDDDESE). The interval 25–45 (EKREEENEEKQEDDDESEKKR) is disordered. A compositionally biased stretch (acidic residues) spans 30–40 (ENEEKQEDDDE). Position 68 is a glycine amide (glycine 68). The propeptide occupies 70-71 (ER).

The protein belongs to the frog skin active peptide (FSAP) family. Plasticin subfamily. As to expression, expressed by the skin glands.

It localises to the secreted. The protein resides in the target cell membrane. Functionally, neutral peptide with no antimicrobial activity. Does not permeate bacterial membranes. May act in synergy with cationic peptides by enhancing their activity. Has a moderate hemolytic activity. It interacts with zwitterionic phospholipids (DMPC) without perturbing either the interface or inside of the bilayer, whereas it causes little perturbations at the interface peptide-anionic vesicles (DMPG) as well as in the bilayer alkyl chains. This is Plasticin-DA1 from Agalychnis dacnicolor (Giant Mexican leaf frog).